A 426-amino-acid polypeptide reads, in one-letter code: mRNA cap guanine-N(7) methyltransferase (426 aa).

Positions 138–421 (SPIIKLRNFN…FYTTFAFRKV (284 aa)) constitute an mRNA cap 0 methyltransferase domain. 147–148 (NN) contributes to the mRNA binding site. S-adenosyl-L-methionine is bound by residues lysine 151, alanine 169, aspartate 191, aspartate 220, glutamine 246, and tyrosine 251.

The protein belongs to the class I-like SAM-binding methyltransferase superfamily. mRNA cap 0 methyltransferase family.

It is found in the nucleus. It carries out the reaction a 5'-end (5'-triphosphoguanosine)-ribonucleoside in mRNA + S-adenosyl-L-methionine = a 5'-end (N(7)-methyl 5'-triphosphoguanosine)-ribonucleoside in mRNA + S-adenosyl-L-homocysteine. Functionally, responsible for methylating the 5'-cap structure of mRNAs. The chain is mRNA cap guanine-N(7) methyltransferase (ABD1) from Kluyveromyces lactis (strain ATCC 8585 / CBS 2359 / DSM 70799 / NBRC 1267 / NRRL Y-1140 / WM37) (Yeast).